Reading from the N-terminus, the 147-residue chain is Hemoglobin subunit beta (147 aa).

The Globin domain maps to 3–147 (EWTDSERAII…VVSALGREYH (145 aa)). Residues histidine 64 and histidine 93 each coordinate heme b.

Belongs to the globin family. Heterotetramer of two alpha chains and two beta chains. In terms of tissue distribution, red blood cells.

In terms of biological role, involved in oxygen transport from gills to the various peripheral tissues. This chain is Hemoglobin subunit beta (hbb), found in Gadus morhua (Atlantic cod).